The following is a 138-amino-acid chain: MLMPKRTKFRKQQKGQFAGLSKGATFVDFGEFGMQTLERGWITSRQIEACRVAINRYLKRKGKVWIRVFPDKSVTKKPAETRMGKGKGAPDHWVAVVRPGRILFEVANVSKEDAQDALRRAAAKLGIRTRFVKRVERV.

It belongs to the universal ribosomal protein uL16 family. In terms of assembly, part of the 50S ribosomal subunit.

Functionally, binds 23S rRNA and is also seen to make contacts with the A and possibly P site tRNAs. The sequence is that of Large ribosomal subunit protein uL16 from Chlamydia muridarum (strain MoPn / Nigg).